We begin with the raw amino-acid sequence, 187 residues long: Cytochrome b-245 chaperone 1 (187 aa).

A helical transmembrane segment spans residues 20–42; the sequence is GIRSWSLLVGILSIGLAAAYYSG. Ser168 carries the post-translational modification Phosphoserine.

The protein belongs to the CYBC1 family. Interacts with CYBB; CYBC1 may act as a chaperone stabilizing Cytochrome b-245 heterodimer.

The protein resides in the endoplasmic reticulum membrane. Its function is as follows. Functions as a chaperone necessary for a stable expression of the CYBA and CYBB subunits of the cytochrome b-245 heterodimer. Controls the phagocyte respiratory burst and is essential for innate immunity. The polypeptide is Cytochrome b-245 chaperone 1 (Bos taurus (Bovine)).